Reading from the N-terminus, the 1013-residue chain is Poly [ADP-ribose] polymerase 1 (1013 aa).

A2 carries the N-acetylalanine modification. The segment at 9-93 adopts a PARP-type 1 zinc-finger fold; it reads YRVEYAKSGR…KVKKTAEAGG (85 aa). Positions 21 and 24 each coordinate Zn(2+). S41 carries the post-translational modification Phosphoserine. Zn(2+)-binding residues include H53 and C56. An N6-acetyllysine mark is found at K97 and K105. A PARP-type 2 zinc finger spans residues 113–203; it reads FAAEYAKSNR…VLKKQLPGVK (91 aa). 2 residues coordinate Zn(2+): C125 and C128. K131 bears the N6-acetyllysine mark. Zn(2+)-binding residues include H159 and C162. Phosphoserine is present on residues S177, S179, and S185. A Glycyl lysine isopeptide (Lys-Gly) (interchain with G-Cter in SUMO2) cross-link involves residue K192. Positions 198–233 are disordered; the sequence is QLPGVKSEGKRKGDEVDGADEVAKKKSKKGKDKDSK. K203 participates in a covalent cross-link: Glycyl lysine isopeptide (Lys-Gly) (interchain with G-Cter in SUMO1); alternate. K203 participates in a covalent cross-link: Glycyl lysine isopeptide (Lys-Gly) (interchain with G-Cter in SUMO2); alternate. Short sequence motifs (nuclear localization signal) lie at residues 207–209 and 221–226; these read KRK and KKKSKK. Residues 225–359 form the PADR1 zinc-binding domain; the sequence is KKGKDKDSKL…VKKQDRIFPP (135 aa). Residue K249 forms a Glycyl lysine isopeptide (Lys-Gly) (interchain with G-Cter in SUMO2) linkage. Phosphoserine occurs at positions 274 and 277. The zinc ribbon stretch occupies residues 290–332; the sequence is GALLPCKECSGQLVFKSDAYYCTGDVTAWTKCMVKTQTPSRKE. Zn(2+) contacts are provided by C295, C298, C311, and C321. The interval 357–383 is disordered; the sequence is FPPETSAPAPPHLPPSVTSAPTAVNSS. Residues 372 to 383 are compositionally biased toward polar residues; it reads SVTSAPTAVNSS. The interval 373 to 523 is automodification domain; that stretch reads VTSAPTAVNS…GVNKSEKRMK (151 aa). In terms of domain architecture, BRCT spans 385–476; it reads PADKPLSNMK…KSLQELLSAH (92 aa). Residue D387 is modified to PolyADP-ribosyl aspartic acid. 7 positions are modified to polyADP-ribosyl glutamic acid: E407, E413, E435, E437, E444, E445, and E456. K467 participates in a covalent cross-link: Glycyl lysine isopeptide (Lys-Gly) (interchain with G-Cter in SUMO2). E471 and E484 each carry polyADP-ribosyl glutamic acid. K486 participates in a covalent cross-link: Glycyl lysine isopeptide (Lys-Gly) (interchain with G-Cter in SUMO1); alternate. K486 participates in a covalent cross-link: Glycyl lysine isopeptide (Lys-Gly) (interchain with G-Cter in SUMO2); alternate. PolyADP-ribosyl glutamic acid occurs at positions 488 and 491. The tract at residues 495-516 is disordered; that stretch reads PKGKSAAPSKKSKGLYKEEGVN. 3 positions are modified to ADP-ribosylserine: S499, S503, and S506. Residue K511 forms a Glycyl lysine isopeptide (Lys-Gly) (interchain with G-Cter in SUMO2) linkage. PolyADP-ribosyl glutamic acid occurs at positions 512 and 513. S518 bears the ADP-ribosylserine mark. E519 is modified (polyADP-ribosyl glutamic acid). The residue at position 520 (K520) is an N6-(ADP-ribosyl)lysine. Residue K527 forms a Glycyl lysine isopeptide (Lys-Gly) (interchain with G-Cter in SUMO2) linkage. One can recognise a WGR domain in the interval 541–637; sequence SAHVLEKGGK…KNFTKYPKKF (97 aa). The residue at position 593 (T593) is a Phosphothreonine. An N6-acetyllysine mark is found at K599 and K620. The region spanning 661–778 is the PARP alpha-helical domain; that stretch reads KSKLPKAVQE…DIEVAYSLLR (118 aa). K747 is covalently cross-linked (Glycyl lysine isopeptide (Lys-Gly) (interchain with G-Cter in SUMO1); alternate). K747 is covalently cross-linked (Glycyl lysine isopeptide (Lys-Gly) (interchain with G-Cter in SUMO2); alternate). Phosphoserine is present on residues S781 and S785. The PARP catalytic domain occupies 787 to 1013; it reads DPIDVNYEKL…LKFNFKTSLW (227 aa). NAD(+)-binding positions include 861–863, G870, R877, and S903; that span reads HGS. E987 functions as the For poly [ADP-ribose] polymerase activity in the catalytic mechanism.

The protein belongs to the ARTD/PARP family. In terms of assembly, homodimer; PARP-type zinc-fingers from separate PARP1 molecules form a dimer module that specifically recognizes DNA strand breaks. Heterodimer; heterodimerizes with PARP2. Interacts (via the PARP catalytic domain) with HPF1. Interacts with NMNAT1. Interacts with nucleosomes; with a preference for nucleosomes containing H2A.X. Interacts with APTX. Component of a base excision repair (BER) complex, containing at least XRCC1, PARP1, PARP2, POLB and LRIG3. Interacts with SRY. The SWAP complex consists of NPM1, NCL, PARP1 and SWAP70. Interacts with TIAM2. Interacts with PARP3; leading to activate PARP1 in absence of DNA. Interacts (when poly-ADP-ribosylated) with CHD1L (via macro domain). Interacts with the DNA polymerase alpha catalytic subunit POLA1; this interaction functions as part of the control of replication fork progression. Interacts with EEF1A1 and TXK. Interacts with RNF4. Interacts with RNF146. Interacts with ZNF423. Interacts with APLF. Interacts with SNAI1 (via zinc fingers); the interaction requires SNAI1 to be poly-ADP-ribosylated and non-phosphorylated (active) by GSK3B. Interacts (when poly-ADP-ribosylated) with PARP9. Interacts with NR4A3; activates PARP1 by improving acetylation of PARP1 and suppressing the interaction between PARP1 and SIRT1. Interacts (via catalytic domain) with PUM3; the interaction inhibits the poly-ADP-ribosylation activity of PARP1 and the degradation of PARP1 by CASP3 following genotoxic stress. Interacts with ZNF365. Interacts with RRP1B. Interacts with TIMELESS; the interaction is direct. Interacts with CGAS; leading to impede the formation of the PARP1-TIMELESS complex. Interacts with KHDC3L, the interaction is increased following the formation of DNA double-strand breaks. Interacts (when auto-poly-ADP-ribosylated) with XRCC1; leading to inhibit PARP1 ADP-ribosyltransferase activity. Interacts with SPINDOC; promoting PARP1 ADP-ribosyltransferase activity. Interacts with BANF1; leading to inhibit PARP1 ADP-ribosyltransferase activity in response to oxidative DNA damage. Interacts (when sumoylated and ubiquitinated) with VCP/p97; leading to its extraction from chromatin. Interacts with YARS1; promoting PARP1 ADP-ribosyltransferase activity. Interacts with PACMP micropeptide; Interacts with PACMP micropeptide; interaction. Interacts (when poly-ADP-ribosylated) with isoform 1 of MACROH2A1; MACROH2A1 specifically binds to poly-ADP-ribose chains and inhibits PARP1 activity, limiting the consumption of nuclear NAD(+). Interacts with CARM1; promoting recruitment to replication forks. Interacts with RECQL. Interacts with ZNF32; the interaction reshapes ZNF432 interacting proteins. Interacts with TPRN; TPRN interacts with a number of DNA damage response proteins, is recruited to sites of DNA damage and may play a role in DNA damage repair. Interacts (when auto-poly-ADP-ribosylated) with AIFM1. Poly-ADP-ribosylated on serine, glutamate and aspartate residues by autocatalysis. Auto-ADP-ribosylation on serine takes place following interaction with HPF1. Auto poly-ADP-ribosylation on serine residues promotes its dissociation from chromatin. Poly-ADP-ribosylated by PARP2; poly-ADP-ribosylation mediates the recruitment of CHD1L to DNA damage sites. Mono-ADP-ribosylated at Lys-520 by SIRT6 in response to oxidative stress, promoting recruitment to double-strand breaks (DSBs) sites. In terms of processing, S-nitrosylated, leading to inhibit transcription regulation activity. Post-translationally, phosphorylated at Thr-593 by PRKDC in response to DNA damage following virus infection, promoting its translocation to the cytosol. Phosphorylated by TXK. Proteolytically cleaved by caspase-3 (CASP3) and caspase-7 (CASP7) in response to apoptosis to generate the Poly [ADP-ribose] polymerase 1, processed N-terminus and Poly [ADP-ribose] polymerase 1, processed C-terminus forms. In terms of processing, sumoylated with SUMO1 or SUMO2 by PIAS4 following prolonged residence (trapping) to chromatin. Sumoylation promotes ubiquitination by RNF4 and removal from chromatin by VCP/p97. Post-translationally, ubiquitinated by RNF4 following sumoylation by PIAS4 in response to prolonged residence (trapping) to chromatin. Ubiquitination promotes removal from chromatin by VCP/p97.

The protein resides in the chromosome. It is found in the nucleus. The protein localises to the nucleolus. It localises to the cytoplasm. Its subcellular location is the cytosol. It carries out the reaction NAD(+) + (ADP-D-ribosyl)n-acceptor = nicotinamide + (ADP-D-ribosyl)n+1-acceptor + H(+).. It catalyses the reaction L-seryl-[protein] + NAD(+) = O-(ADP-D-ribosyl)-L-seryl-[protein] + nicotinamide + H(+). The catalysed reaction is L-aspartyl-[protein] + NAD(+) = 4-O-(ADP-D-ribosyl)-L-aspartyl-[protein] + nicotinamide. The enzyme catalyses L-glutamyl-[protein] + NAD(+) = 5-O-(ADP-D-ribosyl)-L-glutamyl-[protein] + nicotinamide. It carries out the reaction L-tyrosyl-[protein] + NAD(+) = O-(ADP-D-ribosyl)-L-tyrosyl-[protein] + nicotinamide + H(+). It catalyses the reaction L-histidyl-[protein] + NAD(+) = N(tele)-(ADP-D-ribosyl)-L-histidyl-[protein] + nicotinamide + H(+). Its activity is regulated as follows. ADP-ribosyltransferase activity is regulated via an allosteric activation mechanism. In absence of activation signal, PARP1 is autoinhibited by the PARP alpha-helical domain (also named HD region), which prevents effective NAD(+)-binding. Activity is highly stimulated by signals, such as DNA strand breaks. Binding to damaged DNA unfolds the PARP alpha-helical domain, relieving autoinhibition. Poly-ADP-ribosyltransferase activity is tightly regulated and PARP1 is removed from damaged chromatin following initial poly-ADP-ribosylation of chromatin to avoid prolonged residence (trapping) that has cytotoxic consequences. A number of factors (VCP/p97) or post-translational modifications (auto-poly-ADP-ribosylation or ubiquitination) promote PARP1 removal from chromatin. In terms of biological role, poly-ADP-ribosyltransferase that mediates poly-ADP-ribosylation of proteins and plays a key role in DNA repair. Mediates glutamate, aspartate, serine, histidine or tyrosine ADP-ribosylation of proteins: the ADP-D-ribosyl group of NAD(+) is transferred to the acceptor carboxyl group of target residues and further ADP-ribosyl groups are transferred to the 2'-position of the terminal adenosine moiety, building up a polymer with an average chain length of 20-30 units. Serine ADP-ribosylation of proteins constitutes the primary form of ADP-ribosylation of proteins in response to DNA damage. Specificity for the different amino acids is conferred by interacting factors, such as HPF1 and NMNAT1. Following interaction with HPF1, catalyzes serine ADP-ribosylation of target proteins; HPF1 confers serine specificity by completing the PARP1 active site. Also catalyzes tyrosine ADP-ribosylation of target proteins following interaction with HPF1. Following interaction with NMNAT1, catalyzes glutamate and aspartate ADP-ribosylation of target proteins; NMNAT1 confers glutamate and aspartate specificity. PARP1 initiates the repair of DNA breaks: recognizes and binds DNA breaks within chromatin and recruits HPF1, licensing serine ADP-ribosylation of target proteins, such as histones (H2BS6ADPr and H3S10ADPr), thereby promoting decompaction of chromatin and the recruitment of repair factors leading to the reparation of DNA strand breaks. HPF1 initiates serine ADP-ribosylation but restricts the polymerase activity of PARP1 in order to limit the length of poly-ADP-ribose chains. In addition to base excision repair (BER) pathway, also involved in double-strand breaks (DSBs) repair: together with TIMELESS, accumulates at DNA damage sites and promotes homologous recombination repair by mediating poly-ADP-ribosylation. Mediates the poly-ADP-ribosylation of a number of proteins, including itself, APLF, CHFR and NFAT5. In addition to proteins, also able to ADP-ribosylate DNA: catalyzes ADP-ribosylation of DNA strand break termini containing terminal phosphates and a 2'-OH group in single- and double-stranded DNA, respectively. Required for PARP9 and DTX3L recruitment to DNA damage sites. PARP1-dependent PARP9-DTX3L-mediated ubiquitination promotes the rapid and specific recruitment of 53BP1/TP53BP1, UIMC1/RAP80, and BRCA1 to DNA damage sites. PARP1-mediated DNA repair in neurons plays a role in sleep: senses DNA damage in neurons and promotes sleep, facilitating efficient DNA repair. In addition to DNA repair, also involved in other processes, such as transcription regulation, programmed cell death, membrane repair, adipogenesis and innate immunity. Acts as a repressor of transcription: binds to nucleosomes and modulates chromatin structure in a manner similar to histone H1, thereby altering RNA polymerase II. Acts both as a positive and negative regulator of transcription elongation, depending on the context. Acts as a positive regulator of transcription elongation by mediating poly-ADP-ribosylation of NELFE, preventing RNA-binding activity of NELFE and relieving transcription pausing. Acts as a negative regulator of transcription elongation in response to DNA damage by catalyzing poly-ADP-ribosylation of CCNT1, disrupting the phase separation activity of CCNT1 and subsequent activation of CDK9. Involved in replication fork progression following interaction with CARM1: mediates poly-ADP-ribosylation at replication forks, slowing fork progression. Poly-ADP-ribose chains generated by PARP1 also play a role in poly-ADP-ribose-dependent cell death, a process named parthanatos. Also acts as a negative regulator of the cGAS-STING pathway. Acts by mediating poly-ADP-ribosylation of CGAS: PARP1 translocates into the cytosol following phosphorylation by PRKDC and catalyzes poly-ADP-ribosylation and inactivation of CGAS. Acts as a negative regulator of adipogenesis: catalyzes poly-ADP-ribosylation of histone H2B on 'Glu-35' (H2BE35ADPr) following interaction with NMNAT1, inhibiting phosphorylation of H2B at 'Ser-36' (H2BS36ph), thereby blocking expression of pro-adipogenetic genes. Involved in the synthesis of ATP in the nucleus, together with NMNAT1, PARG and NUDT5. Nuclear ATP generation is required for extensive chromatin remodeling events that are energy-consuming. Its function is as follows. Promotes AIFM1-mediated apoptosis. This form, which translocates into the cytoplasm following cleavage by caspase-3 (CASP3) and caspase-7 (CASP7) in response to apoptosis, is auto-poly-ADP-ribosylated and serves as a poly-ADP-ribose carrier to induce AIFM1-mediated apoptosis. This cleavage form irreversibly binds to DNA breaks and interferes with DNA repair, promoting DNA damage-induced apoptosis. This is Poly [ADP-ribose] polymerase 1 (PARP1) from Cricetulus griseus (Chinese hamster).